The chain runs to 285 residues: Chemotaxis protein LafT (285 aa).

The next 4 membrane-spanning stretches (helical) occupy residues 4–23 (FLGV…WAGG), 34–51 (FLII…GNPP), 171–191 (ALPG…MQAI), and 201–222 (HVAA…GLDP). At 223-285 (LSNAMAQRVK…MEKWLAEQEG (63 aa)) the chain is on the cytoplasmic side.

It belongs to the MotA family.

The protein localises to the cell inner membrane. Functionally, required for rotation of the flagellar motor. Probable transmembrane proton channel. This chain is Chemotaxis protein LafT (lafT), found in Vibrio parahaemolyticus serotype O3:K6 (strain RIMD 2210633).